The chain runs to 300 residues: HTH-type transcriptional activator NahR (300 aa).

The HTH lysR-type domain maps to 6–63; the sequence is LDLNLLVVFNQLLVDRRVSITAENLGLTQPAVSNALKRLRTSLQDPLFVRTHQGMEPT. The segment at residues 23-42 is a DNA-binding region (H-T-H motif); the sequence is VSITAENLGLTQPAVSNALK.

The protein belongs to the LysR transcriptional regulatory family.

It is found in the cytoplasm. Regulates the expression of the naphthalene (nahA-F) and salicylate (nahG-M) metabolism genes. The chain is HTH-type transcriptional activator NahR (nahR) from Pseudomonas putida (Arthrobacter siderocapsulatus).